The chain runs to 169 residues: Ureidoglycolate lyase (169 aa).

This sequence belongs to the ureidoglycolate lyase family. As to quaternary structure, homodimer. The cofactor is Ni(2+).

It catalyses the reaction (S)-ureidoglycolate = urea + glyoxylate. It participates in nitrogen metabolism; (S)-allantoin degradation. Catalyzes the catabolism of the allantoin degradation intermediate (S)-ureidoglycolate, generating urea and glyoxylate. Involved in the utilization of allantoin as nitrogen source. This is Ureidoglycolate lyase from Pseudomonas paraeruginosa (strain DSM 24068 / PA7) (Pseudomonas aeruginosa (strain PA7)).